A 437-amino-acid polypeptide reads, in one-letter code: Chromosomal replication initiator protein DnaA (437 aa).

Positions 1-82 (MIFPIWKKCL…KIIINIEKKK (82 aa)) are domain I, interacts with DnaA modulators. The segment at 82–101 (KLEKKKCIYKKKNIQIYLHS) is domain II. Positions 102-318 (EINKKYQFHN…GILKKIQILS (217 aa)) are domain III, AAA+ region. Residues G146, G148, K149, and T150 each coordinate ATP. The tract at residues 319–437 (ILNKEKITIN…FIYLFNQLNA (119 aa)) is domain IV, binds dsDNA.

The protein belongs to the DnaA family. In terms of assembly, oligomerizes as a right-handed, spiral filament on DNA at oriC.

It localises to the cytoplasm. Functionally, plays an essential role in the initiation and regulation of chromosomal replication. ATP-DnaA binds to the origin of replication (oriC) to initiate formation of the DNA replication initiation complex once per cell cycle. Binds the DnaA box (a 9 base pair repeat at the origin) and separates the double-stranded (ds)DNA. Forms a right-handed helical filament on oriC DNA; dsDNA binds to the exterior of the filament while single-stranded (ss)DNA is stabiized in the filament's interior. The ATP-DnaA-oriC complex binds and stabilizes one strand of the AT-rich DNA unwinding element (DUE), permitting loading of DNA polymerase. After initiation quickly degrades to an ADP-DnaA complex that is not apt for DNA replication. Binds acidic phospholipids. This Buchnera aphidicola subsp. Cinara cedri (strain Cc) protein is Chromosomal replication initiator protein DnaA.